Consider the following 185-residue polypeptide: Elongation factor P (185 aa).

It belongs to the elongation factor P family.

The protein localises to the cytoplasm. Its pathway is protein biosynthesis; polypeptide chain elongation. Its function is as follows. Involved in peptide bond synthesis. Stimulates efficient translation and peptide-bond synthesis on native or reconstituted 70S ribosomes in vitro. Probably functions indirectly by altering the affinity of the ribosome for aminoacyl-tRNA, thus increasing their reactivity as acceptors for peptidyl transferase. The chain is Elongation factor P from Paraburkholderia phymatum (strain DSM 17167 / CIP 108236 / LMG 21445 / STM815) (Burkholderia phymatum).